A 307-amino-acid polypeptide reads, in one-letter code: Ribosomal protein L11 methyltransferase (307 aa).

4 residues coordinate S-adenosyl-L-methionine: Thr156, Gly177, Asp199, and Asn243.

This sequence belongs to the methyltransferase superfamily. PrmA family.

It localises to the cytoplasm. It carries out the reaction L-lysyl-[protein] + 3 S-adenosyl-L-methionine = N(6),N(6),N(6)-trimethyl-L-lysyl-[protein] + 3 S-adenosyl-L-homocysteine + 3 H(+). Its function is as follows. Methylates ribosomal protein L11. The chain is Ribosomal protein L11 methyltransferase from Syntrophomonas wolfei subsp. wolfei (strain DSM 2245B / Goettingen).